Here is a 73-residue protein sequence, read N- to C-terminus: Protein F9 homolog (73 aa).

The Virion surface portion of the chain corresponds to 1 to 34 (GHAAANCALARVATALTRRVPASRHGLAEGGTPP). The helical transmembrane segment at 35–55 (WTLLLAVAAVTVLGVVAVSLL) threads the bilayer. Residues 56–73 (RRALRVRYRFARPAALRA) lie on the Intravirion side of the membrane.

Belongs to the chordopoxvirinae L1 protein family.

It is found in the virion membrane. The protein is Protein F9 homolog of Capra hircus (Goat).